The sequence spans 130 residues: Small ribosomal subunit protein uS9 (130 aa).

The protein belongs to the universal ribosomal protein uS9 family.

In Pseudomonas aeruginosa (strain LESB58), this protein is Small ribosomal subunit protein uS9.